We begin with the raw amino-acid sequence, 478 residues long: ATP synthase subunit beta (478 aa).

Position 160–167 (160–167 (GGAGVGKT)) interacts with ATP.

It belongs to the ATPase alpha/beta chains family. In terms of assembly, F-type ATPases have 2 components, CF(1) - the catalytic core - and CF(0) - the membrane proton channel. CF(1) has five subunits: alpha(3), beta(3), gamma(1), delta(1), epsilon(1). CF(0) has three main subunits: a(1), b(2) and c(9-12). The alpha and beta chains form an alternating ring which encloses part of the gamma chain. CF(1) is attached to CF(0) by a central stalk formed by the gamma and epsilon chains, while a peripheral stalk is formed by the delta and b chains.

Its subcellular location is the cell inner membrane. The enzyme catalyses ATP + H2O + 4 H(+)(in) = ADP + phosphate + 5 H(+)(out). Produces ATP from ADP in the presence of a proton gradient across the membrane. The catalytic sites are hosted primarily by the beta subunits. The polypeptide is ATP synthase subunit beta (Orientia tsutsugamushi (strain Ikeda) (Rickettsia tsutsugamushi)).